A 502-amino-acid polypeptide reads, in one-letter code: Glycerol kinase (502 aa).

Thr14 contributes to the ADP binding site. ATP is bound by residues Thr14, Thr15, and Ser16. Thr14 provides a ligand contact to sn-glycerol 3-phosphate. An ADP-binding site is contributed by Arg18. The sn-glycerol 3-phosphate site is built by Arg84, Glu85, Tyr136, and Asp246. Glycerol contacts are provided by Arg84, Glu85, Tyr136, Asp246, and Gln247. Thr268 and Gly311 together coordinate ADP. The ATP site is built by Thr268, Gly311, Gln315, and Gly412. The ADP site is built by Gly412 and Asn416.

The protein belongs to the FGGY kinase family. In terms of assembly, homotetramer and homodimer (in equilibrium). Heterodimer with EIIA-Glc. Binds 1 zinc ion per glycerol kinase EIIA-Glc dimer. The zinc ion is important for dimerization.

The catalysed reaction is glycerol + ATP = sn-glycerol 3-phosphate + ADP + H(+). Its pathway is polyol metabolism; glycerol degradation via glycerol kinase pathway; sn-glycerol 3-phosphate from glycerol: step 1/1. Activity of this regulatory enzyme is affected by several metabolites. Allosterically and non-competitively inhibited by fructose 1,6-bisphosphate (FBP) and unphosphorylated phosphocarrier protein EIIA-Glc (III-Glc), an integral component of the bacterial phosphotransferase (PTS) system. Functionally, key enzyme in the regulation of glycerol uptake and metabolism. Catalyzes the phosphorylation of glycerol to yield sn-glycerol 3-phosphate. This chain is Glycerol kinase, found in Escherichia fergusonii (strain ATCC 35469 / DSM 13698 / CCUG 18766 / IAM 14443 / JCM 21226 / LMG 7866 / NBRC 102419 / NCTC 12128 / CDC 0568-73).